Consider the following 194-residue polypeptide: High mobility group protein B4 (194 aa).

2 consecutive DNA-binding regions (HMG box) follow at residues 9–79 (PKAN…MNYF) and 93–161 (PRRP…SVYR).

This sequence belongs to the HMGB family.

The protein localises to the nucleus. The protein resides in the chromosome. This Bos taurus (Bovine) protein is High mobility group protein B4 (HMGB4).